We begin with the raw amino-acid sequence, 376 residues long: Ribosomal RNA large subunit methyltransferase G (376 aa).

This sequence belongs to the methyltransferase superfamily. RlmG family.

The protein resides in the cytoplasm. The catalysed reaction is guanosine(1835) in 23S rRNA + S-adenosyl-L-methionine = N(2)-methylguanosine(1835) in 23S rRNA + S-adenosyl-L-homocysteine + H(+). Functionally, specifically methylates the guanine in position 1835 (m2G1835) of 23S rRNA. The protein is Ribosomal RNA large subunit methyltransferase G of Klebsiella pneumoniae (strain 342).